We begin with the raw amino-acid sequence, 108 residues long: Trp operon repressor homolog (108 aa).

The DNA-binding element occupies 59–82 (QRQISQLLGVGVATITRGSNELKS).

It belongs to the TrpR family. As to quaternary structure, homodimer.

Its subcellular location is the cytoplasm. Its function is as follows. This protein is an aporepressor. When complexed with L-tryptophan it binds the operator region of the trp operon and prevents the initiation of transcription. The sequence is that of Trp operon repressor homolog from Aliivibrio salmonicida (strain LFI1238) (Vibrio salmonicida (strain LFI1238)).